The chain runs to 144 residues: Cell division protein SepF (144 aa).

The protein belongs to the SepF family. In terms of assembly, homodimer. Interacts with FtsZ.

It is found in the cytoplasm. In terms of biological role, cell division protein that is part of the divisome complex and is recruited early to the Z-ring. Probably stimulates Z-ring formation, perhaps through the cross-linking of FtsZ protofilaments. Its function overlaps with FtsA. The chain is Cell division protein SepF from Oceanobacillus iheyensis (strain DSM 14371 / CIP 107618 / JCM 11309 / KCTC 3954 / HTE831).